A 168-amino-acid polypeptide reads, in one-letter code: MVKDILAPGLRVVFCGINPGLSSANTGFPFAHPANRFWKVIHLAGFSDRQLKPEEAEKLLDFRCGVTKLVDRPTVQATEVKLHELRSGGRNLIDKIEDYQPAALAVLGKQAFEQGFSQRGIAWGKQKIAIGATMVWVLPNPSGLNRIKTEKLVEAYRELDQALIMRGL.

The protein belongs to the uracil-DNA glycosylase (UDG) superfamily. TDG/mug family. In terms of assembly, binds DNA as a monomer.

The protein resides in the cytoplasm. It catalyses the reaction Specifically hydrolyzes mismatched double-stranded DNA and polynucleotides, releasing free uracil.. In terms of biological role, excises ethenocytosine and uracil, which can arise by alkylation or deamination of cytosine, respectively, from the corresponding mispairs with guanine in ds-DNA. It is capable of hydrolyzing the carbon-nitrogen bond between the sugar-phosphate backbone of the DNA and the mispaired base. The complementary strand guanine functions in substrate recognition. Required for DNA damage lesion repair in stationary-phase cells. This Salmonella paratyphi B (strain ATCC BAA-1250 / SPB7) protein is G/U mismatch-specific DNA glycosylase.